Here is a 97-residue protein sequence, read N- to C-terminus: Sugar transporter SemiSWEET (97 aa).

The PQ-loop domain occupies 4 to 70 (IERIGKALEP…IYGIYHKNPT (67 aa)). The next 3 helical transmembrane spans lie at 15–35 (MLVM…KLYV), 44–65 (LSLT…YGIY), and 71–91 (IWVG…GIIA).

As to quaternary structure, homodimer.

Its subcellular location is the cell membrane. The homodimer mediates transmembrane sugar transport down a concentration gradient. Transport is probably effected by rocking-type movements, where a cargo-binding cavity opens first on one and then on the other side of the membrane. The polypeptide is Sugar transporter SemiSWEET (Vibrio sp. (strain N418)).